We begin with the raw amino-acid sequence, 130 residues long: Small ribosomal subunit protein uS11 (130 aa).

Belongs to the universal ribosomal protein uS11 family. Part of the 30S ribosomal subunit. Interacts with proteins S7 and S18. Binds to IF-3.

In terms of biological role, located on the platform of the 30S subunit, it bridges several disparate RNA helices of the 16S rRNA. Forms part of the Shine-Dalgarno cleft in the 70S ribosome. This Buchnera aphidicola subsp. Schizaphis graminum (strain Sg) protein is Small ribosomal subunit protein uS11.